The chain runs to 425 residues: Glutamate-1-semialdehyde 2,1-aminomutase (425 aa).

The residue at position 264 (K264) is an N6-(pyridoxal phosphate)lysine.

It belongs to the class-III pyridoxal-phosphate-dependent aminotransferase family. HemL subfamily. As to quaternary structure, homodimer. The cofactor is pyridoxal 5'-phosphate.

The protein localises to the cytoplasm. It catalyses the reaction (S)-4-amino-5-oxopentanoate = 5-aminolevulinate. Its pathway is porphyrin-containing compound metabolism; protoporphyrin-IX biosynthesis; 5-aminolevulinate from L-glutamyl-tRNA(Glu): step 2/2. The polypeptide is Glutamate-1-semialdehyde 2,1-aminomutase (Hydrogenobaculum sp. (strain Y04AAS1)).